The following is an 829-amino-acid chain: Venom phosphodiesterase CdcPDE (829 aa).

2 consecutive SMB domains span residues 8–51 and 52–96; these read PQVS…VLPT and QSWS…GETS. 16 disulfides stabilise this stretch: Cys12/Cys16, Cys12/Cys29, Cys16/Cys47, Cys27/Cys29, Cys27/Cys40, Cys33/Cys39, Cys40/Cys47, Cys56/Cys61, Cys56/Cys73, Cys61/Cys91, Cys71/Cys73, Cys71/Cys84, Cys77/Cys83, Cys84/Cys91, Cys102/Cys148, and Cys110/Cys322. The N-linked (GlcNAc...) asparagine glycan is linked to Asn17. The Cell attachment site signature appears at 36–38; it reads RQA. A divalent metal cation is bound by residues Asp125 and Thr163. Thr163 acts as the AMP-threonine intermediate in catalysis. Residues Asn194 and Asn237 are each glycosylated (N-linked (GlcNAc...) asparagine). Position 249 (Lys249) interacts with AMP. Asp283, His287, Asp330, and His331 together coordinate a divalent metal cation. Residue His287 coordinates AMP. 6 disulfides stabilise this stretch: Cys338–Cys435, Cys386–Cys771, Cys519–Cys577, Cys532–Cys632, Cys534–Cys617, and Cys740–Cys750. The N-linked (GlcNAc...) asparagine glycan is linked to Asn383. His440 is a binding site for a divalent metal cation. 2 N-linked (GlcNAc...) asparagine glycosylation sites follow: Asn572 and Asn652.

This sequence belongs to the nucleotide pyrophosphatase/phosphodiesterase family. Monomer. The cofactor is a divalent metal cation. Post-translationally, N-glycosylated. Glycosylation counts for an increased mass of ~9%. In terms of processing, contains 16 disulfide bonds. As to expression, expressed by venom gland.

It localises to the secreted. It carries out the reaction ADP + H2O = AMP + phosphate + H(+). Functionally, hydrolyzes ADP with high activity. Shows weak or no activity on 5'-AMP, 5'-GMP, 3'-AMP, ATP, cAMP, and cGMP. Is devoid of monophosphatase and proteinase activities. Inhibits ADP-induced platelet aggregation and is cytotoxic to human keratinocytes. Kinetic parameters indicated a higher affinity for the substrate bis(p-nitrophenyl) phosphate compared to others snake venom PDEs. Is recognized by the crotalid antivenom produced by the Instituto Butantan. This Crotalus durissus collilineatus (Brazilian rattlesnake) protein is Venom phosphodiesterase CdcPDE.